The following is a 497-amino-acid chain: E3 ubiquitin-protein ligase CBL-C (497 aa).

The 4H stretch occupies residues 7–145 (PQGWQWGEPR…SALFPEGKYC (139 aa)). Positions 7–321 (PQGWQWGEPR…GKNHNPDLTE (315 aa)) constitute a Cbl-PTB domain. The interval 146 to 218 (GHLYQITKGS…FEFDIFTRLF (73 aa)) is EF-hand-like. The Ca(2+) site is built by Asp-199, Thr-201, and Glu-210. The SH2-like stretch occupies residues 219–321 (QPWPTLLKNW…GKNHNPDLTE (103 aa)). Arg-264 provides a ligand contact to 4-O-phospho-L-tyrosine. The segment at 322 to 350 (LCRAVLNQCIQVSQEQLQLYQAMNSTFEL) is linker. A Phosphotyrosine; by SRC modification is found at Tyr-341. An RING-type zinc finger spans residues 351 to 390 (CKICTERDKDVRIEPCGHLLCSCCLAAWQHSDSQTCPFCR). The interval 351–497 (CKICTERDKD…QVREGATESS (147 aa)) is interaction with RET.

As to quaternary structure, interacts with Ubiquitin-conjugating enzyme E2 UBE2D2 and UBE2D3. Interacts with EGFR (tyrosine phosphorylated). Interacts with the SH3 domain proteins LYN and CRK. Interacts (via RING-type zinc finger) with TGFB1I1 (via LIM zinc-binding domain 2); the interaction is direct and enhances the E3 activity. Interacts directly with RET (inactive) and CD2AP; dissociates from RET upon RET activation by GDNF which also increases the interaction with CD2AP suggesting dissociation as CBLC:CD2AP complex. Interacts with SRC; the interaction is enhanced when SRC is phosphorylated at 'Tyr-419'. Phosphorylated on multiple tyrosine residues by SRC. In terms of processing, autoubiquitinated, when phosphorylated at Tyr-341.

It carries out the reaction S-ubiquitinyl-[E2 ubiquitin-conjugating enzyme]-L-cysteine + [acceptor protein]-L-lysine = [E2 ubiquitin-conjugating enzyme]-L-cysteine + N(6)-ubiquitinyl-[acceptor protein]-L-lysine.. Phosphorylation at Tyr-341 is necessary and sufficient for the activation of E3 activity. In terms of biological role, acts as an E3 ubiquitin-protein ligase, which accepts ubiquitin from specific E2 ubiquitin-conjugating enzymes, and then transfers it to substrates promoting their degradation by the proteasome. Functionally coupled with the E2 ubiquitin-protein ligases UB2D1, UB2D2 and UB2D3. Regulator of EGFR mediated signal transduction; upon EGF activation, ubiquitinates EGFR. Inhibits EGF stimulated MAPK1 activation. Promotes ubiquitination of SRC phosphorylated at 'Tyr-419', has the highest ubiquitin ligase activity among CBL family proteins. In collaboration with CD2AP may act as regulatory checkpoint for Ret signaling by modulating the rate of RET degradation after ligand activation; CD2AP converts it from an inhibitor to a promoter of RET degradation; the function limits the potency of GDNF on neuronal survival. The protein is E3 ubiquitin-protein ligase CBL-C (Cblc) of Rattus norvegicus (Rat).